Consider the following 205-residue polypeptide: MRLRYDKNAEGKLEMFNYLIKQGDSKILLDDKTVLEIGMGKGEMIVELAKAHPELNFIGLEKYPTVAAKCIKKANEYNLSNFKILIDDAFKVDEIFEGQCKVIWLTFSDPWPKARHEKRRLTHPLFLEKYRKILDKDGILKFKSDNDGLYEFSLSSLQNSNWRIIDHGIDLHNSKYNENNYQTGYERKWSARGKKINYIFAQKGE.

S-adenosyl-L-methionine is bound by residues Glu36, Glu61, Asp88, and Asp109. The active site involves Asp109. Lys113 contacts substrate. Residues 115 to 120 (RHEKRR) form an interaction with RNA region. Substrate contacts are provided by residues Asp145 and 183 to 186 (TGYE).

Belongs to the class I-like SAM-binding methyltransferase superfamily. TrmB family.

The enzyme catalyses guanosine(46) in tRNA + S-adenosyl-L-methionine = N(7)-methylguanosine(46) in tRNA + S-adenosyl-L-homocysteine. The protein operates within tRNA modification; N(7)-methylguanine-tRNA biosynthesis. Catalyzes the formation of N(7)-methylguanine at position 46 (m7G46) in tRNA. The polypeptide is tRNA (guanine-N(7)-)-methyltransferase (Mycoplasmopsis agalactiae (strain NCTC 10123 / CIP 59.7 / PG2) (Mycoplasma agalactiae)).